A 67-amino-acid polypeptide reads, in one-letter code: Metallothionein-B (67 aa).

The protein belongs to the metallothionein superfamily. Type 4 family.

Its function is as follows. Metallothioneins have a high content of cysteine residues that bind various heavy metals. This Sphaerechinus granularis (Purple sea urchin) protein is Metallothionein-B.